The primary structure comprises 545 residues: External NADH-ubiquinone oxidoreductase 2, mitochondrial (545 aa).

The N-terminal 21 residues, 1-21 (MLPRLGFARTARSIHRFKMTQ), are a transit peptide targeting the mitochondrion. 99 to 129 (ELVILGTGWGAISLLKKLDTSLYNVTVVSPR) lines the FAD pocket. 260–296 (LTFVVVGGGPTGVEFAAELQDYINQDLRKWMPDLSKE) provides a ligand contact to NAD(+).

Belongs to the NADH dehydrogenase family.

It localises to the mitochondrion intermembrane space. The enzyme catalyses a quinone + NADH + H(+) = a quinol + NAD(+). It catalyses the reaction a ubiquinone + NADH + H(+) = a ubiquinol + NAD(+). External NADH dehydrogenase required for optimum cellular growth with a number of nonfermentable carbon sources, including ethanol. With NDE1, performes the mitochondrial oxidation of cytosolic NADH under these growth conditions. Regulates the mitochondrial glycerol-3-phosphate dehydrogenase, GUT2, also involved in cytosolic NADH oxidation. The sequence is that of External NADH-ubiquinone oxidoreductase 2, mitochondrial (NDE2) from Saccharomyces cerevisiae (strain ATCC 204508 / S288c) (Baker's yeast).